The chain runs to 132 residues: Small ribosomal subunit protein uS8 (132 aa).

Belongs to the universal ribosomal protein uS8 family. In terms of assembly, part of the 30S ribosomal subunit. Contacts proteins S5 and S12.

Functionally, one of the primary rRNA binding proteins, it binds directly to 16S rRNA central domain where it helps coordinate assembly of the platform of the 30S subunit. This chain is Small ribosomal subunit protein uS8, found in Baumannia cicadellinicola subsp. Homalodisca coagulata.